The primary structure comprises 78 residues: Small ribosomal subunit protein bS16c (78 aa).

Belongs to the bacterial ribosomal protein bS16 family.

The protein localises to the plastid. It is found in the chloroplast. The chain is Small ribosomal subunit protein bS16c from Daucus carota (Wild carrot).